Consider the following 344-residue polypeptide: FCS-Like Zinc finger 10 (344 aa).

The FLZ-type zinc-finger motif lies at 270–314 (DFLSFCYGCSKKLGMGEDIYMYSGYKAFCSSECRSKEIDLDEEME). Acidic residues predominate over residues 309 to 320 (LDEEMEDGDEEE). Residues 309 to 344 (LDEEMEDGDEEEAIKSVSSSDKESKKKSNGVFFTVG) are disordered.

It belongs to the FLZ family. In terms of assembly, interacts with KIN10 and KIN11 via its FLZ-type zinc finger domain. Interacts with KINB1, KINB2 and KINB3 via its N-terminal part. Forms homodimer and heterodimer with FLZ2 and FLZ12 in vitro. As to expression, early expressed in hypocotyl and cotyledon and preferentially in the stelar region of the shoot and root. Later expressed in root-shoot junction, lateral root, old or senescing leaves and in pistil and pollen of flower buds or open flowers.

The protein resides in the cytoplasm. The protein localises to the nucleus. It localises to the endoplasmic reticulum. May act as an adapter to facilitate the interaction of SnRK1 complex with effector proteins, conferring tissue- and stimulus-type specific differences in the SnRK1 regulation pathway. Negatively regulates KIN10 leading to a repression of the SnRK1 signaling pathway. The chain is FCS-Like Zinc finger 10 from Arabidopsis thaliana (Mouse-ear cress).